Consider the following 255-residue polypeptide: tRNA (guanine-N(1)-)-methyltransferase (255 aa).

S-adenosyl-L-methionine is bound by residues Gly-113 and 133–138 (IGDYVL).

It belongs to the RNA methyltransferase TrmD family. In terms of assembly, homodimer.

It localises to the cytoplasm. It catalyses the reaction guanosine(37) in tRNA + S-adenosyl-L-methionine = N(1)-methylguanosine(37) in tRNA + S-adenosyl-L-homocysteine + H(+). Functionally, specifically methylates guanosine-37 in various tRNAs. The polypeptide is tRNA (guanine-N(1)-)-methyltransferase (Escherichia coli O81 (strain ED1a)).